The sequence spans 213 residues: Probable septum site-determining protein MinC (213 aa).

Belongs to the MinC family. In terms of assembly, interacts with MinD and FtsZ.

Cell division inhibitor that blocks the formation of polar Z ring septums. Rapidly oscillates between the poles of the cell to destabilize FtsZ filaments that have formed before they mature into polar Z rings. Prevents FtsZ polymerization. The sequence is that of Probable septum site-determining protein MinC from Clostridium botulinum (strain Eklund 17B / Type B).